We begin with the raw amino-acid sequence, 354 residues long: Uroporphyrinogen decarboxylase (354 aa).

Substrate-binding positions include 27–31 (RQAGR), D77, Y154, T209, and H327.

The protein belongs to the uroporphyrinogen decarboxylase family. In terms of assembly, homodimer.

The protein resides in the cytoplasm. It catalyses the reaction uroporphyrinogen III + 4 H(+) = coproporphyrinogen III + 4 CO2. The protein operates within porphyrin-containing compound metabolism; protoporphyrin-IX biosynthesis; coproporphyrinogen-III from 5-aminolevulinate: step 4/4. Catalyzes the decarboxylation of four acetate groups of uroporphyrinogen-III to yield coproporphyrinogen-III. This is Uroporphyrinogen decarboxylase from Escherichia coli O17:K52:H18 (strain UMN026 / ExPEC).